We begin with the raw amino-acid sequence, 117 residues long: Ribosome-binding factor A (117 aa).

Belongs to the RbfA family. Monomer. Binds 30S ribosomal subunits, but not 50S ribosomal subunits or 70S ribosomes.

It localises to the cytoplasm. Its function is as follows. One of several proteins that assist in the late maturation steps of the functional core of the 30S ribosomal subunit. Associates with free 30S ribosomal subunits (but not with 30S subunits that are part of 70S ribosomes or polysomes). Required for efficient processing of 16S rRNA. May interact with the 5'-terminal helix region of 16S rRNA. The polypeptide is Ribosome-binding factor A (Petrotoga mobilis (strain DSM 10674 / SJ95)).